A 676-amino-acid chain; its full sequence is Nicastrin (676 aa).

A signal peptide spans Met1 to Ala28. Residues Asp29 to Asp644 are Extracellular-facing. N-linked (GlcNAc...) asparagine glycosylation is found at Asn58, Asn336, Asn371, Asn444, Asn480, Asn555, and Asn611. A helical transmembrane segment spans residues Asn645 to Ala665. Residues Lys666 to Asp676 lie on the Cytoplasmic side of the membrane.

Belongs to the nicastrin family. Probable component of the gamma-secretase complex, a complex composed of a presenilin homodimer, nicastrin, APH1 and PEN2.

Its subcellular location is the membrane. Probable subunit of the gamma-secretase complex, an endoprotease complex that catalyzes the intramembrane cleavage of integral membrane proteins such as Notch. This is Nicastrin from Arabidopsis thaliana (Mouse-ear cress).